A 298-amino-acid chain; its full sequence is Probable pyridoxal 5'-phosphate synthase subunit SNZ2 (298 aa).

Aspartate 21 is a D-ribose 5-phosphate binding site. The active-site Schiff-base intermediate with D-ribose 5-phosphate is lysine 78. Residues glycine 150, glycine 213, and 234–235 (GS) contribute to the D-ribose 5-phosphate site.

Belongs to the PdxS/SNZ family. Homohexamer. Interacts with THI11.

It catalyses the reaction aldehydo-D-ribose 5-phosphate + D-glyceraldehyde 3-phosphate + L-glutamine = pyridoxal 5'-phosphate + L-glutamate + phosphate + 3 H2O + H(+). It functions in the pathway cofactor biosynthesis; pyridoxal 5'-phosphate biosynthesis. In terms of biological role, catalyzes the formation of pyridoxal 5'-phosphate from ribose 5-phosphate (RBP), glyceraldehyde 3-phosphate (G3P) and ammonia. The ammonia is provided by a SNO isoform. Can also use ribulose 5-phosphate and dihydroxyacetone phosphate as substrates, resulting from enzyme-catalyzed isomerization of RBP and G3P, respectively. The protein is Probable pyridoxal 5'-phosphate synthase subunit SNZ2 (SNZ2) of Saccharomyces cerevisiae (strain ATCC 204508 / S288c) (Baker's yeast).